Here is a 122-residue protein sequence, read N- to C-terminus: MIQPQTYLNVADNSGAKKPMCIRILKASNRKYANTGNVIVAVVKEAVPNMPLRKSEIVRAVVVRTCKELKRNNGMIIQFDDNAAVIINQEGNPRGTRVFGPVARESREFNFTKIVSLAPEVL.

Belongs to the universal ribosomal protein uL14 family. In terms of assembly, part of the 50S ribosomal subunit.

It is found in the plastid. Its subcellular location is the chloroplast. Binds to 23S rRNA. The polypeptide is Large ribosomal subunit protein uL14c (Huperzia lucidula (Shining clubmoss)).